The sequence spans 396 residues: Elongation factor Tu 2 (396 aa).

A tr-type G domain is found at 10-206 (KPHVNVGTIG…ALDTYIPTPE (197 aa)). The segment at 19 to 26 (GHVDHGKT) is G1. 19 to 26 (GHVDHGKT) lines the GTP pocket. Residue T26 coordinates Mg(2+). Residues 60–64 (GITIN) are G2. The interval 81 to 84 (DCPG) is G3. GTP contacts are provided by residues 81-85 (DCPGH) and 136-139 (NKAD). A G4 region spans residues 136 to 139 (NKAD). The segment at 174–176 (SAK) is G5.

The protein belongs to the TRAFAC class translation factor GTPase superfamily. Classic translation factor GTPase family. EF-Tu/EF-1A subfamily. As to quaternary structure, monomer.

The protein localises to the cytoplasm. It carries out the reaction GTP + H2O = GDP + phosphate + H(+). In terms of biological role, GTP hydrolase that promotes the GTP-dependent binding of aminoacyl-tRNA to the A-site of ribosomes during protein biosynthesis. This chain is Elongation factor Tu 2, found in Methylobacillus flagellatus (strain ATCC 51484 / DSM 6875 / VKM B-1610 / KT).